Consider the following 212-residue polypeptide: 3-isopropylmalate dehydratase small subunit (212 aa).

Belongs to the LeuD family. LeuD type 1 subfamily. In terms of assembly, heterodimer of LeuC and LeuD.

The enzyme catalyses (2R,3S)-3-isopropylmalate = (2S)-2-isopropylmalate. It functions in the pathway amino-acid biosynthesis; L-leucine biosynthesis; L-leucine from 3-methyl-2-oxobutanoate: step 2/4. Catalyzes the isomerization between 2-isopropylmalate and 3-isopropylmalate, via the formation of 2-isopropylmaleate. In Dechloromonas aromatica (strain RCB), this protein is 3-isopropylmalate dehydratase small subunit.